Consider the following 565-residue polypeptide: Hemagglutinin-neuraminidase (565 aa).

Topologically, residues 1-20 are intravirion; that stretch reads MVAEDAPVRGTCRVLFRTTT. Residues 21–41 form a helical membrane-spanning segment; that stretch reads LIFLCTLLALSISILYESLII. The Virion surface portion of the chain corresponds to 42–565; it reads RKQIMSQAGS…VPFIRQVTLS (524 aa). N-linked (GlcNAc...) asparagine; by host glycosylation is found at Asn110 and Asn139. Intrachain disulfides connect Cys161–Cys185, Cys175–Cys236, and Cys227–Cys240. The involved in neuraminidase activity stretch occupies residues 223-228; sequence NRKSCS. The N-linked (GlcNAc...) asparagine; by host glycan is linked to Asn267. Disulfide bonds link Cys333-Cys454, Cys365-Cys375, and Cys448-Cys458. Asn504 carries an N-linked (GlcNAc...) asparagine; by host glycan. Cys528 and Cys539 are oxidised to a cystine.

The protein belongs to the paramyxoviruses hemagglutinin-neuraminidase family. As to quaternary structure, homotetramer; composed of disulfide-linked homodimers. Interacts with F protein trimer.

It is found in the virion membrane. Its subcellular location is the host cell membrane. It catalyses the reaction Hydrolysis of alpha-(2-&gt;3)-, alpha-(2-&gt;6)-, alpha-(2-&gt;8)- glycosidic linkages of terminal sialic acid residues in oligosaccharides, glycoproteins, glycolipids, colominic acid and synthetic substrates.. Attaches the virus to sialic acid-containing cell receptors and thereby initiating infection. Binding of HN protein to the receptor induces a conformational change that allows the F protein to trigger virion/cell membranes fusion. Its function is as follows. Neuraminidase activity ensures the efficient spread of the virus by dissociating the mature virions from the neuraminic acid containing glycoproteins. The chain is Hemagglutinin-neuraminidase (HN) from Canis lupus familiaris (Dog).